A 158-amino-acid chain; its full sequence is NADH-quinone oxidoreductase subunit B (158 aa).

Residues Cys37, Cys38, Cys102, and Cys132 each coordinate [4Fe-4S] cluster.

The protein belongs to the complex I 20 kDa subunit family. In terms of assembly, NDH-1 is composed of 14 different subunits. Subunits NuoB, C, D, E, F, and G constitute the peripheral sector of the complex. Requires [4Fe-4S] cluster as cofactor.

It is found in the cell inner membrane. It carries out the reaction a quinone + NADH + 5 H(+)(in) = a quinol + NAD(+) + 4 H(+)(out). In terms of biological role, NDH-1 shuttles electrons from NADH, via FMN and iron-sulfur (Fe-S) centers, to quinones in the respiratory chain. The immediate electron acceptor for the enzyme in this species is believed to be ubiquinone. Couples the redox reaction to proton translocation (for every two electrons transferred, four hydrogen ions are translocated across the cytoplasmic membrane), and thus conserves the redox energy in a proton gradient. The polypeptide is NADH-quinone oxidoreductase subunit B (Halorhodospira halophila (strain DSM 244 / SL1) (Ectothiorhodospira halophila (strain DSM 244 / SL1))).